The sequence spans 179 residues: Large ribosomal subunit protein uL10 (179 aa).

This sequence belongs to the universal ribosomal protein uL10 family. In terms of assembly, part of the ribosomal stalk of the 50S ribosomal subunit. The N-terminus interacts with L11 and the large rRNA to form the base of the stalk. The C-terminus forms an elongated spine to which L12 dimers bind in a sequential fashion forming a multimeric L10(L12)X complex.

In terms of biological role, forms part of the ribosomal stalk, playing a central role in the interaction of the ribosome with GTP-bound translation factors. This is Large ribosomal subunit protein uL10 from Thermotoga petrophila (strain ATCC BAA-488 / DSM 13995 / JCM 10881 / RKU-1).